A 325-amino-acid chain; its full sequence is Hydroxymethylglutaryl-CoA lyase, mitochondrial (325 aa).

A mitochondrion-targeting transit peptide spans 1-27 (MASVRKAFPRRLVGLTSLRAVSTSSMG). In terms of domain architecture, Pyruvate carboxyltransferase spans 33–300 (VKIVEVGPRD…HTGVNLQKLL (268 aa)). A substrate-binding site is contributed by R41. D42 serves as a coordination point for a divalent metal cation. K48 carries the N6-acetyllysine; alternate modification. K48 is modified (N6-succinyllysine; alternate). Position 111 is an N6-acetyllysine (K111). N6-acetyllysine; alternate occurs at positions 137 and 179. N6-succinyllysine; alternate occurs at positions 137 and 179. Residues H233 and H235 each contribute to the a divalent metal cation site. Residue C266 is part of the active site. Residue N275 coordinates a divalent metal cation. The Microbody targeting signal motif lies at 323-325 (CKL). The residue at position 324 (K324) is an N6-acetyllysine.

It belongs to the HMG-CoA lyase family. In terms of assembly, homodimer; disulfide-linked. Can also form homotetramers.

The protein resides in the mitochondrion matrix. It localises to the peroxisome. It carries out the reaction (3S)-3-hydroxy-3-methylglutaryl-CoA = acetoacetate + acetyl-CoA. It functions in the pathway metabolic intermediate metabolism; (S)-3-hydroxy-3-methylglutaryl-CoA degradation; acetoacetate from (S)-3-hydroxy-3-methylglutaryl-CoA: step 1/1. Mitochondrial 3-hydroxy-3-methylglutaryl-CoA lyase that catalyzes a cation-dependent cleavage of (S)-3-hydroxy-3-methylglutaryl-CoA into acetyl-CoA and acetoacetate, a key step in ketogenesis. Terminal step in leucine catabolism. Ketone bodies (beta-hydroxybutyrate, acetoacetate and acetone) are essential as an alternative source of energy to glucose, as lipid precursors and as regulators of metabolism. The sequence is that of Hydroxymethylglutaryl-CoA lyase, mitochondrial (Hmgcl) from Mus musculus (Mouse).